The following is a 434-amino-acid chain: Glutamyl-tRNA reductase (434 aa).

Substrate contacts are provided by residues 52 to 55 (TCNR), serine 115, 120 to 122 (ETQ), and glutamine 126. Cysteine 53 serves as the catalytic Nucleophile. 195-200 (GAGEMI) serves as a coordination point for NADP(+).

The protein belongs to the glutamyl-tRNA reductase family. Homodimer.

The catalysed reaction is (S)-4-amino-5-oxopentanoate + tRNA(Glu) + NADP(+) = L-glutamyl-tRNA(Glu) + NADPH + H(+). It participates in porphyrin-containing compound metabolism; protoporphyrin-IX biosynthesis; 5-aminolevulinate from L-glutamyl-tRNA(Glu): step 1/2. Functionally, catalyzes the NADPH-dependent reduction of glutamyl-tRNA(Glu) to glutamate 1-semialdehyde (GSA). The chain is Glutamyl-tRNA reductase from Cupriavidus metallidurans (strain ATCC 43123 / DSM 2839 / NBRC 102507 / CH34) (Ralstonia metallidurans).